A 330-amino-acid polypeptide reads, in one-letter code: Aspartate--ammonia ligase (330 aa).

Belongs to the class-II aminoacyl-tRNA synthetase family. AsnA subfamily.

Its subcellular location is the cytoplasm. It carries out the reaction L-aspartate + NH4(+) + ATP = L-asparagine + AMP + diphosphate + H(+). It participates in amino-acid biosynthesis; L-asparagine biosynthesis; L-asparagine from L-aspartate (ammonia route): step 1/1. In Yersinia enterocolitica serotype O:8 / biotype 1B (strain NCTC 13174 / 8081), this protein is Aspartate--ammonia ligase.